The primary structure comprises 411 residues: MAKINDNYLKLKAGYLFPEIGRRVRAFAAANPEAKVIRLGIGDVTQPLTPTILKAFHEAVDDLASENSFMGYGPEQGYDFLIDAIVEKSYKPLGVDLKTTEMFISDGSKCDCANILDIFALDNTVAIGDPVYPVYNDTNVMIGRTGDADDKGYYKGLVYMPCTEENGFFPAYPKEKVDMIYLCFPNNPTGAVATKEQLKGWVDYALANDSIILFDAAYEAFITDPSIPHSIYQVEGAKKCAIEFRSFSKTAGFTGVRCGLVVVPEELEGTTSNGEKYSFNKLWLRRQTTKFNGASYPVQKAAAAVYTEQGWKETQANIDYYMENARIIREGLASAGLTVYGGVNAPYIWLKTPAGLTSWDFFDKLLNDCHVVGTPGSGFGPSGEGYFRLSAFGNRDNVVEAVERIKKNLKK.

Substrate is bound by residues tyrosine 15 and glycine 42. Residues tyrosine 72, 108 to 109 (SK), tyrosine 132, asparagine 187, tyrosine 218, and 246 to 248 (SFS) each bind pyridoxal 5'-phosphate. Residues lysine 109, tyrosine 132, and asparagine 187 each contribute to the substrate site. Residue lysine 249 is modified to N6-(pyridoxal phosphate)lysine. Pyridoxal 5'-phosphate-binding residues include arginine 257 and asparagine 292. Residues asparagine 292 and arginine 388 each contribute to the substrate site.

It belongs to the class-I pyridoxal-phosphate-dependent aminotransferase family. LL-diaminopimelate aminotransferase subfamily. In terms of assembly, homodimer. Pyridoxal 5'-phosphate serves as cofactor.

It catalyses the reaction (2S,6S)-2,6-diaminopimelate + 2-oxoglutarate = (S)-2,3,4,5-tetrahydrodipicolinate + L-glutamate + H2O + H(+). It functions in the pathway amino-acid biosynthesis; L-lysine biosynthesis via DAP pathway; LL-2,6-diaminopimelate from (S)-tetrahydrodipicolinate (aminotransferase route): step 1/1. Its function is as follows. Involved in the synthesis of meso-diaminopimelate (m-DAP or DL-DAP), required for both lysine and peptidoglycan biosynthesis. Catalyzes the direct conversion of tetrahydrodipicolinate to LL-diaminopimelate. The protein is LL-diaminopimelate aminotransferase of Geobacter sp. (strain M21).